The chain runs to 678 residues: UvrABC system protein C (678 aa).

The GIY-YIG domain occupies 16 to 95; it reads VEPGVYRFRD…IKEFDPRFNI (80 aa). One can recognise a UVR domain in the interval 208-243; that stretch reads DRLIREMEQQMNAAAEELDFERAARLRDNIGAMRRA. Residues 477 to 508 are disordered; it reads HLRDAEAAPEGRPEQGPRASARPEQGPRASAR. Residues 479–491 are compositionally biased toward basic and acidic residues; the sequence is RDAEAAPEGRPEQ.

Belongs to the UvrC family. Interacts with UvrB in an incision complex.

It localises to the cytoplasm. In terms of biological role, the UvrABC repair system catalyzes the recognition and processing of DNA lesions. UvrC both incises the 5' and 3' sides of the lesion. The N-terminal half is responsible for the 3' incision and the C-terminal half is responsible for the 5' incision. This Mycolicibacterium vanbaalenii (strain DSM 7251 / JCM 13017 / BCRC 16820 / KCTC 9966 / NRRL B-24157 / PYR-1) (Mycobacterium vanbaalenii) protein is UvrABC system protein C.